Consider the following 428-residue polypeptide: UPF0761 membrane protein TERTU_3006 (428 aa).

7 helical membrane passes run Leu-47 to Phe-67, Leu-104 to Glu-124, Tyr-143 to Leu-163, Val-189 to Cys-209, Ile-218 to Val-238, Gly-248 to Leu-268, and Met-292 to Val-312.

Belongs to the UPF0761 family.

It is found in the cell inner membrane. The protein is UPF0761 membrane protein TERTU_3006 of Teredinibacter turnerae (strain ATCC 39867 / T7901).